The following is a 382-amino-acid chain: Sphingoid long-chain base transporter RSB1 (382 aa).

Residues 1–34 (MSNATNNTLGSLLPQLEAAANSNSLYGGMVPNLR) are Extracellular-facing. N-linked (GlcNAc...) asparagine glycosylation is found at asparagine 3 and asparagine 6. The helical transmembrane segment at 35-55 (FNITMIVIWGILLTIHVVQLL) threads the bilayer. The Cytoplasmic portion of the chain corresponds to 56 to 57 (MR). A helical transmembrane segment spans residues 58-78 (QYWFSIAFICTGILEVLGYIG). The Extracellular segment spans residues 79 to 90 (RTWSHSNVADMD). The helical transmembrane segment at 91-111 (AFLLNMICLTIAPVFTMGGIY) threads the bilayer. Topologically, residues 112–135 (YQLAKLIEVYGHRFSLLPSPMAYS) are cytoplasmic. A helical membrane pass occupies residues 136–156 (FIFICSDIVSLVVQAVGGGLC). Over 157–171 (GVAVTDGTSTTTGNH) the chain is Extracellular. Residues 172–192 (VFIAGLAIQVASMAIFLMLWF) traverse the membrane as a helical segment. Topologically, residues 193–241 (HFLFRIYISVRWEHINSRPISLSLLKISQTEVDYLYREKFHFLRLEPKR) are cytoplasmic. The chain crosses the membrane as a helical span at residues 242–262 (WVFHYFNLAMTVAVLTIFTRC). The Extracellular segment spans residues 263–281 (CYRLAELVVGWDGYLITHE). A helical transmembrane segment spans residues 282–302 (WYFIILDALMMAIATVTLTIF). Residues 303–382 (HPGFAFKGRS…LFSSKKKAKL (80 aa)) lie on the Cytoplasmic side of the membrane.

It belongs to the lipid-translocating exporter (LTE) (TC 9.A.26.1) family.

It localises to the cell membrane. Its function is as follows. Catalyzes the ATP-dependent translocation of sphingoid long-chain bases (LCBs) from the cytoplasmic site toward the extracytoplasmic side of the membrane (flip-flop). Involved in the establishment of the functional lipid asymmetry of the plasma membrane. Regulates intracellular levels of LCBs, sphingolipid precursors that are growth inhibitory at increased levels. The protein is Sphingoid long-chain base transporter RSB1 (RSB1) of Saccharomyces cerevisiae (strain Lalvin EC1118 / Prise de mousse) (Baker's yeast).